The chain runs to 978 residues: Monofunctional C1-tetrahydrofolate synthase, mitochondrial (978 aa).

The span at 1–10 (MGTRLPLVLR) shows a compositional bias: low complexity. The N-terminal 31 residues, 1–31 (MGTRLPLVLRQLRRPPQPPGPPRRLRVPCRA), are a transit peptide targeting the mitochondrion. The tract at residues 1 to 71 (MGTRLPLVLR…SPGGRTPAAR (71 aa)) is disordered. Positions 31–348 (ASSGGGGGGG…REQQHRRWRL (318 aa)) are methylenetetrahydrofolate dehydrogenase and cyclohydrolase. Residues 33-45 (SGGGGGGGGGREG) are compositionally biased toward gly residues. The residue at position 189 (Lys189) is an N6-acetyllysine; alternate. An N6-succinyllysine; alternate modification is found at Lys189. A formyltetrahydrofolate synthetase region spans residues 349 to 978 (HCLKLQPLSP…TETEQVKGLF (630 aa)). A Phosphoserine modification is found at Ser357. 423 to 430 (TPLGEGKS) is a binding site for ATP. An N6-succinyllysine modification is found at Lys596.

The protein in the N-terminal section; belongs to the tetrahydrofolate dehydrogenase/cyclohydrolase family. This sequence in the C-terminal section; belongs to the formate--tetrahydrofolate ligase family. As to quaternary structure, homodimer. As to expression, detected in most tissues, highest expression found in placenta, thymus and brain. Low expression is found in liver and skeletal muscle. Up-regulated in colon adenocarcinoma.

The protein localises to the mitochondrion. The catalysed reaction is (6S)-5,6,7,8-tetrahydrofolate + formate + ATP = (6R)-10-formyltetrahydrofolate + ADP + phosphate. Its pathway is one-carbon metabolism; tetrahydrofolate interconversion. Its function is as follows. May provide the missing metabolic reaction required to link the mitochondria and the cytoplasm in the mammalian model of one-carbon folate metabolism complementing thus the enzymatic activities of MTHFD2. The chain is Monofunctional C1-tetrahydrofolate synthase, mitochondrial from Homo sapiens (Human).